The primary structure comprises 331 residues: MKQTVYIASPESQQIHVWNLNHEGALTLTQVVDVPGQVQPMVVSPDKRYLYVGVRPEFRVLAYRIAPDDGALTFAAESALPGSPTHISTDHLGQFVFVGSYNAGNVSVTRLEDGLPVGVVDVVEGLDGCHSANISPDNRTLWVPALKQDRICLFTVSDDGHLVAQDPAEVTTVEGAGPRHMVFHPNEQYAYCVNELNSSVDVWELKDPHGNIECVQTLDMMPENFSDTRWAADIHITPDGRHLYACDRTASLITVFSVSEDGSVLSKEGFQPTETQPRGFNVDHSGKYLIAAGQKSHHISVYEIVGEQGLLHEKGRYAVGQGPMWVVVNAH.

N6-acetyllysine is present on K287.

This sequence belongs to the cycloisomerase 2 family.

The catalysed reaction is 6-phospho-D-glucono-1,5-lactone + H2O = 6-phospho-D-gluconate + H(+). It functions in the pathway carbohydrate degradation; pentose phosphate pathway; D-ribulose 5-phosphate from D-glucose 6-phosphate (oxidative stage): step 2/3. Its function is as follows. Catalyzes the hydrolysis of 6-phosphogluconolactone to 6-phosphogluconate. The polypeptide is 6-phosphogluconolactonase (Escherichia coli O127:H6 (strain E2348/69 / EPEC)).